We begin with the raw amino-acid sequence, 345 residues long: Fe-S cluster assembly protein DRE2 (345 aa).

An N-terminal SAM-like domain region spans residues 29 to 163 (GDSGDRTLLL…KPDYAEQEVV (135 aa)). The linker stretch occupies residues 164–237 (PLRFGAKKVN…EDTLLTEADL (74 aa)). The [2Fe-2S] cluster site is built by Cys247, Cys258, Cys261, and Cys263. The interval 247-263 (CAPQPGKKRRACKDCTC) is fe-S binding site A. Residues Cys308, Cys311, Cys319, and Cys322 each contribute to the [4Fe-4S] cluster site. 2 short sequence motifs (cx2C motif) span residues 308–311 (CNSC) and 319–322 (CADC). The segment at 308–322 (CNSCYLGDAFRCADC) is fe-S binding site B.

It belongs to the anamorsin family. Monomer. Interacts with TAH18. Interacts with MIA40. Requires [2Fe-2S] cluster as cofactor. [4Fe-4S] cluster serves as cofactor.

The protein resides in the cytoplasm. Its subcellular location is the mitochondrion intermembrane space. Component of the cytosolic iron-sulfur (Fe-S) protein assembly (CIA) machinery required for the maturation of extramitochondrial Fe-S proteins. Part of an electron transfer chain functioning in an early step of cytosolic Fe-S biogenesis, facilitating the de novo assembly of a [4Fe-4S] cluster on the scaffold complex CFD1-NBP35. Electrons are transferred to DRE2 from NADPH via the FAD- and FMN-containing protein TAH18. TAH18-DRE2 are also required for the assembly of the diferric tyrosyl radical cofactor of ribonucleotide reductase (RNR), probably by providing electrons for reduction during radical cofactor maturation in the catalytic small subunit RNR2. This is Fe-S cluster assembly protein DRE2 from Podospora anserina (strain S / ATCC MYA-4624 / DSM 980 / FGSC 10383) (Pleurage anserina).